Reading from the N-terminus, the 450-residue chain is Sulfide:quinone oxidoreductase, mitochondrial (450 aa).

FAD contacts are provided by residues 53–54 (SG), Glu75, Gln83, and Val118. Position 173 is an N6-acetyllysine (Lys173). Cys201 acts as the Cysteine persulfide intermediate in catalysis. A disulfide bond links Cys201 and Cys379. Asp336 lines the FAD pocket. Ser343 is modified (phosphoserine). FAD is bound at residue 344–347 (KTAA). Residue Cys379 is the Cysteine persulfide intermediate of the active site.

Belongs to the SQRD family. FAD serves as cofactor.

The protein localises to the mitochondrion. The enzyme catalyses ubiquinone-10 + hydrogen sulfide + sulfite + 2 H(+) = ubiquinol-10 + thiosulfate. It carries out the reaction a quinone + hydrogen sulfide + glutathione + H(+) = S-sulfanylglutathione + a quinol. It catalyses the reaction ubiquinone-10 + hydrogen sulfide + glutathione + H(+) = S-sulfanylglutathione + ubiquinol-10. Catalyzes the oxidation of hydrogen sulfide with the help of a quinone, such as ubiquinone-10, giving rise to thiosulfate and ultimately to sulfane (molecular sulfur) atoms. Requires an additional electron acceptor; can use sulfite, sulfide or cyanide (in vitro). It is believed the in vivo electron acceptor is glutathione. This is Sulfide:quinone oxidoreductase, mitochondrial from Homo sapiens (Human).